The following is a 326-amino-acid chain: tRNA uridine(34) hydroxylase (326 aa).

In terms of domain architecture, Rhodanese spans 123-217 (SDPEVLLIDT…YLEEVKPEES (95 aa)). Cys-177 (cysteine persulfide intermediate) is an active-site residue. The tract at residues 293-326 (KSRGESHIGSDVKQVIEARRQDKVERKQRQHQEG) is disordered.

This sequence belongs to the TrhO family.

It carries out the reaction uridine(34) in tRNA + AH2 + O2 = 5-hydroxyuridine(34) in tRNA + A + H2O. Its function is as follows. Catalyzes oxygen-dependent 5-hydroxyuridine (ho5U) modification at position 34 in tRNAs. The protein is tRNA uridine(34) hydroxylase of Shewanella loihica (strain ATCC BAA-1088 / PV-4).